A 272-amino-acid polypeptide reads, in one-letter code: Enoyl-[acyl-carrier-protein] reductase [NADH] 1 (272 aa).

NAD(+) contacts are provided by residues glycine 17, 23 to 24 (SI), glutamine 44, 68 to 69 (DV), and isoleucine 96. Active-site proton acceptor residues include tyrosine 149 and tyrosine 159. NAD(+)-binding positions include lysine 166 and 195–199 (IKTLA).

The protein belongs to the short-chain dehydrogenases/reductases (SDR) family. FabI subfamily.

Its subcellular location is the cell inner membrane. It catalyses the reaction a 2,3-saturated acyl-[ACP] + NAD(+) = a (2E)-enoyl-[ACP] + NADH + H(+). It functions in the pathway lipid metabolism; fatty acid biosynthesis. The protein is Enoyl-[acyl-carrier-protein] reductase [NADH] 1 (fabI1) of Rhizobium meliloti (strain 1021) (Ensifer meliloti).